The following is a 163-amino-acid chain: Peptide deformylase (163 aa).

Positions 91 and 133 each coordinate Fe cation. Glutamate 134 is an active-site residue. Histidine 137 contacts Fe cation.

It belongs to the polypeptide deformylase family. Requires Fe(2+) as cofactor.

It catalyses the reaction N-terminal N-formyl-L-methionyl-[peptide] + H2O = N-terminal L-methionyl-[peptide] + formate. Its function is as follows. Removes the formyl group from the N-terminal Met of newly synthesized proteins. Requires at least a dipeptide for an efficient rate of reaction. N-terminal L-methionine is a prerequisite for activity but the enzyme has broad specificity at other positions. The protein is Peptide deformylase of Lachnoclostridium phytofermentans (strain ATCC 700394 / DSM 18823 / ISDg) (Clostridium phytofermentans).